The sequence spans 290 residues: tRNA dimethylallyltransferase (290 aa).

11–18 (GPTASGKS) contributes to the ATP binding site. 13 to 18 (TASGKS) provides a ligand contact to substrate. 2 interaction with substrate tRNA regions span residues 36-39 (DSMQ) and 158-162 (QRIVR).

This sequence belongs to the IPP transferase family. In terms of assembly, monomer. Mg(2+) is required as a cofactor.

It catalyses the reaction adenosine(37) in tRNA + dimethylallyl diphosphate = N(6)-dimethylallyladenosine(37) in tRNA + diphosphate. In terms of biological role, catalyzes the transfer of a dimethylallyl group onto the adenine at position 37 in tRNAs that read codons beginning with uridine, leading to the formation of N6-(dimethylallyl)adenosine (i(6)A). This Bartonella tribocorum (strain CIP 105476 / IBS 506) protein is tRNA dimethylallyltransferase.